Here is an 853-residue protein sequence, read N- to C-terminus: MKFGFIAHPTSLGLKRYVKMLDLLQRNSTEQHSGYTRELWERQNLVPFMNFARITSATGATCEGVIKYMPLVADEMLADARGIAARVVQGIEELAGDGAELVGLGGFTSIVGRRGEATAEKSPVPVTSGNSLTTYAGYKALMQIQSWLEIRPEEEPVAIVGYPGSICLALSRLLLAHGFSLHLLHRAGNHDRSELLSHLPEEYHSRVTLTSDPEDLYPRCKLFAAATSAGGVIDPARLQPGSIFIDVALPRDIASETRPARDDILIIDGGCVTATDAVKLGGESLNVTIKQQLNGCMAETIVLALENRRENFSLGRYLAPEKVLEIGEIAERHGFFAYPLASYGERIDRQSVTNLKRYYHHDIYAGESADAALPASRLAFIDAVIAQTPAREDTLDRYHQYINPMMVDFLKLQRCDNVFRSAAGTQLYDDAGEAFLDMVAGYGCLNLGHNPQPVVNALKNYLDAQGPNFIQYISIPEQTAKLAEVLCRLAPGNMGRVFFSNSGTEAVEAAMKIAKASTGKPGIAYLRNSYHGKTLGALSITGRDKHRRYFTPLLDAMVEVPFGDLAALREALNREDVGALMIEPIQGEGGVHIPPAGYLQAVQQLCRETGVLLMVDEVQTGLGRTGKLFACEWDGIEPDVLMLSKSLSGGLIPIGATLCRADLWQKAYGTADRFLVHSSTYGGGNLASVVALSALREILAQDLVGHAERMGAYFKQALSEIAARYPFVSEVRGRGLMLGIQFDQAFTGAVNASAREFATRLPGDWHTTWKFLPDPVQAHLRAAMDRMEQALGEMFCMKFVTKLCQDHKILTFITANSSTVIRIQPPLIISKAEIDRFVGAFATVCEELSTFLD.

503 to 504 (GT) provides a ligand contact to pyridoxal 5'-phosphate. Lysine 645 bears the N6-(pyridoxal phosphate)lysine mark. Threonine 680 lines the pyridoxal 5'-phosphate pocket.

It belongs to the class-III pyridoxal-phosphate-dependent aminotransferase family. In terms of assembly, homodimer. Pyridoxal 5'-phosphate is required as a cofactor.

The protein operates within antibiotic biosynthesis; prodigiosin biosynthesis. Functionally, involved in the biosynthesis of 2-methyl-3-n-amyl-pyrrole (MAP), one of the terminal products involved in the biosynthesis of the red antibiotic prodigiosin (Pig). Catalyzes the transamination to the aldehyde group of 3-acetyloctanal, resulting in an aminoketone, which spontaneously cyclizes to yield the dihydro form of MAP (H2MAP). This Serratia sp. (strain FS14) protein is Aminotransferase PigE.